The following is a 1046-amino-acid chain: Protein jim lovell (1046 aa).

The segment at 54–109 (TSDHAPMHSTPPTTPPTPPPLPLNMSQSASAVTEAATPENSLPATPPSEGALAVPS) is disordered. Positions 65-75 (PTTPPTPPPLP) are enriched in pro residues. One can recognise a BTB domain in the interval 140 to 205 (VDVTLVCAET…MYRGEISVPQ (66 aa)). Disordered regions lie at residues 290–342 (LRRK…DAES), 355–501 (AERD…KLQD), 632–655 (PPFG…PGQA), 686–719 (EFGP…GMSS), 758–791 (RDMP…RSWT), 851–947 (EMLQ…APNA), and 998–1046 (DCKS…TGHD). A compositionally biased stretch (basic and acidic residues) spans 294-303 (REQESDRDLE). The span at 315–324 (PRRKQARPRR) shows a compositional bias: basic residues. Positions 365–380 (QDNSQGEAEKISSSPA) are enriched in polar residues. Positions 383 to 412 (LVERAKEQKSMKEEGSDQPRSLNENHHQLE) are enriched in basic and acidic residues. Over residues 413–432 (LDDEDDDDQDHEEEEEQDIE) the composition is skewed to acidic residues. Basic and acidic residues predominate over residues 433–443 (ELIHTTNELRR). Positions 445-454 (AAAAAANAAA) are enriched in low complexity. Gly residues predominate over residues 636-651 (GHNGGHPGNSGPGNGC). Residues 703-714 (DGPPHPPSPLPF) are compositionally biased toward pro residues. Positions 768–777 (LKKKMPRPKG) are enriched in basic residues. One can recognise an HTH psq-type domain in the interval 781–833 (APRGGPPRSWTNTELTEALQHVWNKKMTTSQASRIFGIPYNSLLMYVRGKYGK). Residues 866 to 881 (KNEKSKERKEKEKDKN) are compositionally biased toward basic and acidic residues. Composition is skewed to low complexity over residues 882–897 (SMSS…SQGG) and 912–925 (LGPM…LGLP).

In terms of tissue distribution, initially expressed at blastoderm stage, transient accumulation at dorso-lateral positions of the embryo and differences along the longitudinal axis. At later stages of embryogenesis, expression is found exclusively in neural anlagen. Expressed in 4 posterior-most ventral unpaired median interneurons (VUM) neurons, VUM interneurons and one progeny of the median neuroblast (MNB).

Its subcellular location is the nucleus. Its function is as follows. Has a regulatory role during midline cell development. This chain is Protein jim lovell (lov), found in Drosophila melanogaster (Fruit fly).